Consider the following 404-residue polypeptide: uncharacterized protein (404 aa).

Residues 262–278 (VSTGDTSPCGTEDSSPA) show a composition bias toward polar residues. 2 disordered regions span residues 262 to 307 (VSTG…SPSL) and 319 to 340 (MKKS…SGAD). A phosphoserine mark is found at serine 268, serine 276, and serine 279. A phosphothreonine mark is found at threonine 290 and threonine 293. 5 positions are modified to phosphoserine: serine 304, serine 306, serine 324, serine 358, and serine 362. Over residues 319 to 336 (MKKSHSANDSEEFFREDD) the composition is skewed to basic and acidic residues.

This is an uncharacterized protein from Mus musculus (Mouse).